Reading from the N-terminus, the 77-residue chain is U11-lycotoxin-Ls1a (77 aa).

The first 20 residues, 1 to 20, serve as a signal peptide directing secretion; it reads MKLIILTGLVLFAIVSFIEA. Residues 21-26 constitute a propeptide that is removed on maturation; that stretch reads EEETGR.

It belongs to the neurotoxin 19 (CSTX) family. 10 (U11-Lctx) subfamily. Post-translationally, contains 4 disulfide bonds. As to expression, expressed by the venom gland.

It localises to the secreted. This Lycosa singoriensis (Wolf spider) protein is U11-lycotoxin-Ls1a.